A 59-amino-acid polypeptide reads, in one-letter code: Protein translocase subunit SecE (59 aa).

A helical transmembrane segment spans residues 39–59; sequence VMALFLGLIDALFVALLSFFF.

This sequence belongs to the SecE/SEC61-gamma family. Component of the Sec protein translocase complex. Heterotrimer consisting of SecY, SecE and SecG subunits. The heterotrimers can form oligomers, although 1 heterotrimer is thought to be able to translocate proteins. Interacts with the ribosome. Interacts with SecDF, and other proteins may be involved. Interacts with SecA.

It is found in the cell inner membrane. Its function is as follows. Essential subunit of the Sec protein translocation channel SecYEG. Clamps together the 2 halves of SecY. May contact the channel plug during translocation. The polypeptide is Protein translocase subunit SecE (Treponema pallidum (strain Nichols)).